We begin with the raw amino-acid sequence, 577 residues long: CTP synthase (577 aa).

The segment at 1 to 268 (MDPAFIFITG…GALLCERLRL (268 aa)) is amidoligase domain. Ser-14 is a CTP binding site. A UTP-binding site is contributed by Ser-14. Residue 15-20 (SLGKGI) participates in ATP binding. Tyr-55 contacts L-glutamine. Residue Asp-72 participates in ATP binding. Residues Asp-72 and Glu-142 each coordinate Mg(2+). Residues 149–151 (DIE), 189–194 (KTKPLQ), and Lys-225 each bind CTP. UTP-binding positions include 189–194 (KTKPLQ) and Lys-225. A Glutamine amidotransferase type-1 domain is found at 333-575 (TVALVGKYVS…VAAGLERKDS (243 aa)). Residue Gly-396 coordinates L-glutamine. Cys-423 functions as the Nucleophile; for glutamine hydrolysis in the catalytic mechanism. Residues 424–427 (LGMQ), Glu-447, and Arg-503 contribute to the L-glutamine site. Catalysis depends on residues His-548 and Glu-550.

This sequence belongs to the CTP synthase family. Homotetramer.

It carries out the reaction UTP + L-glutamine + ATP + H2O = CTP + L-glutamate + ADP + phosphate + 2 H(+). The catalysed reaction is L-glutamine + H2O = L-glutamate + NH4(+). It catalyses the reaction UTP + NH4(+) + ATP = CTP + ADP + phosphate + 2 H(+). It functions in the pathway pyrimidine metabolism; CTP biosynthesis via de novo pathway; CTP from UDP: step 2/2. Its activity is regulated as follows. Allosterically activated by GTP, when glutamine is the substrate; GTP has no effect on the reaction when ammonia is the substrate. The allosteric effector GTP functions by stabilizing the protein conformation that binds the tetrahedral intermediate(s) formed during glutamine hydrolysis. Inhibited by the product CTP, via allosteric rather than competitive inhibition. Functionally, catalyzes the ATP-dependent amination of UTP to CTP with either L-glutamine or ammonia as the source of nitrogen. Regulates intracellular CTP levels through interactions with the four ribonucleotide triphosphates. The protein is CTP synthase of Treponema pallidum (strain Nichols).